A 127-amino-acid chain; its full sequence is Aspartate 1-decarboxylase (127 aa).

Ser-25 functions as the Schiff-base intermediate with substrate; via pyruvic acid in the catalytic mechanism. Residue Ser-25 is modified to Pyruvic acid (Ser). Thr-57 contacts substrate. Tyr-58 acts as the Proton donor in catalysis. Residue 73-75 (GAA) coordinates substrate.

The protein belongs to the PanD family. In terms of assembly, heterooctamer of four alpha and four beta subunits. The cofactor is pyruvate. Is synthesized initially as an inactive proenzyme, which is activated by self-cleavage at a specific serine bond to produce a beta-subunit with a hydroxyl group at its C-terminus and an alpha-subunit with a pyruvoyl group at its N-terminus.

The protein localises to the cytoplasm. It carries out the reaction L-aspartate + H(+) = beta-alanine + CO2. Its pathway is cofactor biosynthesis; (R)-pantothenate biosynthesis; beta-alanine from L-aspartate: step 1/1. Catalyzes the pyruvoyl-dependent decarboxylation of aspartate to produce beta-alanine. The sequence is that of Aspartate 1-decarboxylase from Shouchella clausii (strain KSM-K16) (Alkalihalobacillus clausii).